A 467-amino-acid polypeptide reads, in one-letter code: MAP kinase-interacting serine/threonine-protein kinase 2 (467 aa).

Positions 83 to 367 (QLQQEILGEG…AAQVLQHPWV (285 aa)) constitute a Protein kinase domain. Residues 89 to 97 (LGEGAYAKV) and Lys-112 each bind ATP. Catalysis depends on Asp-204, which acts as the Proton acceptor. Zn(2+) contacts are provided by Cys-298, Cys-310, and Cys-313. The interval 432–467 (MQLSPPSESKLAKRRQQGSKGGISPPSLAPLLIVSD) is disordered.

Belongs to the protein kinase superfamily. CAMK Ser/Thr protein kinase family. Requires Mg(2+) as cofactor. Zn(2+) serves as cofactor.

It carries out the reaction L-seryl-[protein] + ATP = O-phospho-L-seryl-[protein] + ADP + H(+). The catalysed reaction is L-threonyl-[protein] + ATP = O-phospho-L-threonyl-[protein] + ADP + H(+). Its function is as follows. May play a role in the response to environmental stress and cytokines. Appears to regulate translation by phosphorylating EIF4E, thus increasing the affinity of this protein for the 7-methylguanosine-containing mRNA cap. This is MAP kinase-interacting serine/threonine-protein kinase 2 (mknk2) from Xenopus laevis (African clawed frog).